A 477-amino-acid chain; its full sequence is Cobyric acid synthase (477 aa).

The GATase cobBQ-type domain maps to 248-432 (GLHIACPMLS…LHGLFSGDGF (185 aa)). Catalysis depends on cysteine 330, which acts as the Nucleophile. Histidine 424 is an active-site residue.

Belongs to the CobB/CobQ family. CobQ subfamily.

The protein operates within cofactor biosynthesis; adenosylcobalamin biosynthesis. Its function is as follows. Catalyzes amidations at positions B, D, E, and G on adenosylcobyrinic A,C-diamide. NH(2) groups are provided by glutamine, and one molecule of ATP is hydrogenolyzed for each amidation. The chain is Cobyric acid synthase from Paracoccus denitrificans (strain Pd 1222).